The primary structure comprises 230 residues: Protein tumorous testis (230 aa).

The 92-residue stretch at glycine 37–serine 128 folds into the RRM domain.

As to quaternary structure, part of a complex composed of at least tut, bam and bgcn; complex formation does not require RNA. Interacts with bam (via N-terminus); the interaction is direct. Interacts with bgcn; the interaction is indirect and is mediated by bam. As part of the bam-bgcn-tut complex associates with twin; may recruit the CCR4-NOT1 deadenylation complex to mRNA 3'UTRs to mediate post-transcriptional regulation of expression.

The protein resides in the cytoplasm. Its function is as follows. RNA binding protein that forms a complex with bam and bgcn, involved in 3'UTR-dependent regulation of a subset of mRNAs. Preferentially binds a long isoform of mei-P26 transcripts. Involved in 3'UTR-dependent post-transcriptional repression of several 3'-RNA processing factors. Involved in promoting germline stem cell lineage differentiation and mitosis-to-meiosis transition. Required for proper transit amplification of spermatogonia. This is Protein tumorous testis from Drosophila melanogaster (Fruit fly).